A 139-amino-acid chain; its full sequence is MLMPKRVKHRKVMRGKMKGNAGRGTTVTFGTYALKALEPAWITSRQIEAARVAMNRFMKRDGKIWIRIFPDKPVTKKPAETRMGSGKGNPEFWVAVVKPGRIMFEAEGVSQEVATEAFRLAAKKLPIKTKFIVRPEHEG.

The protein belongs to the universal ribosomal protein uL16 family. In terms of assembly, part of the 50S ribosomal subunit.

Functionally, binds 23S rRNA and is also seen to make contacts with the A and possibly P site tRNAs. The protein is Large ribosomal subunit protein uL16 of Prosthecochloris aestuarii (strain DSM 271 / SK 413).